Here is a 153-residue protein sequence, read N- to C-terminus: Small ribosomal subunit protein uS19A (153 aa).

It belongs to the universal ribosomal protein uS19 family. In terms of assembly, component of the small ribosomal subunit (SSU). Mature yeast ribosomes consist of a small (40S) and a large (60S) subunit. The 40S small subunit contains 1 molecule of ribosomal RNA (18S rRNA) and at least 33 different proteins. The large 60S subunit contains 3 rRNA molecules (25S, 5.8S and 5S rRNA) and at least 46 different proteins.

It localises to the cytoplasm. Its subcellular location is the nucleus. The protein resides in the nucleolus. Its function is as follows. Component of the ribosome, a large ribonucleoprotein complex responsible for the synthesis of proteins in the cell. The small ribosomal subunit (SSU) binds messenger RNAs (mRNAs) and translates the encoded message by selecting cognate aminoacyl-transfer RNA (tRNA) molecules. The large subunit (LSU) contains the ribosomal catalytic site termed the peptidyl transferase center (PTC), which catalyzes the formation of peptide bonds, thereby polymerizing the amino acids delivered by tRNAs into a polypeptide chain. The nascent polypeptides leave the ribosome through a tunnel in the LSU and interact with protein factors that function in enzymatic processing, targeting, and the membrane insertion of nascent chains at the exit of the ribosomal tunnel. uS19 is involved in the nuclear export of the small ribosomal subunit precursor. Has a role in the late stage of the assembly of pre-40S particles within the nucleus and controls their export to the cytoplasm. The polypeptide is Small ribosomal subunit protein uS19A (rps1501) (Schizosaccharomyces pombe (strain 972 / ATCC 24843) (Fission yeast)).